Here is a 328-residue protein sequence, read N- to C-terminus: P2Y purinoceptor 3 (328 aa).

Topologically, residues methionine 1–valine 22 are extracellular. The N-linked (GlcNAc...) asparagine glycan is linked to asparagine 5. A helical membrane pass occupies residues leucine 23 to isoleucine 43. The Cytoplasmic portion of the chain corresponds to glycine 44–threonine 57. The chain crosses the membrane as a helical span at residues isoleucine 58–isoleucine 78. Topologically, residues tyrosine 79–phenylalanine 96 are extracellular. The cysteines at positions 94 and 172 are disulfide-linked. Residues valine 97 to valine 117 traverse the membrane as a helical segment. Over glutamine 118 to threonine 139 the chain is Cytoplasmic. Residues tryptophan 140–phenylalanine 160 form a helical membrane-spanning segment. The Extracellular segment spans residues alanine 161–isoleucine 189. The chain crosses the membrane as a helical span at residues threonine 190–methionine 210. At alanine 211 to lysine 231 the chain is on the cytoplasmic side. Residues alanine 232–leucine 252 form a helical membrane-spanning segment. Topologically, residues threonine 253–alanine 275 are extracellular. Residues isoleucine 276–phenylalanine 298 traverse the membrane as a helical segment. Residues threonine 299–cysteine 323 lie on the Cytoplasmic side of the membrane.

It belongs to the G-protein coupled receptor 1 family.

It is found in the cell membrane. Functionally, receptor for extracellular UDP &gt; ADP = UTP. The activity of this receptor is mediated by G proteins which activate a phosphatidylinositol-calcium second messenger system. The chain is P2Y purinoceptor 3 (P2RY3) from Meleagris gallopavo (Wild turkey).